A 137-amino-acid polypeptide reads, in one-letter code: Interferon-induced transmembrane protein 3 (137 aa).

The Cytoplasmic segment spans residues 1–57; sequence MNHTSQAFVNAATGGQPPNYERIKEEYEVSELGAPHGSASVRTTVINMPREVSVPDH. Phosphotyrosine is present on Tyr20. A Glycyl lysine isopeptide (Lys-Gly) (interchain with G-Cter in ubiquitin) cross-link involves residue Lys24. At Tyr27 the chain carries Phosphotyrosine. Residues 58 to 78 constitute an intramembrane region (helical); it reads VVWSLFNTLFMNFCCLGFIAY. The interval 60–93 is interaction with SPP1; sequence WSLFNTLFMNFCCLGFIAYAYSVKSRDRKMVGDM. 2 S-palmitoyl cysteine lipidation sites follow: Cys71 and Cys72. Over 79–109 the chain is Cytoplasmic; that stretch reads AYSVKSRDRKMVGDMTGAQAYASTAKCLNIS. Glycyl lysine isopeptide (Lys-Gly) (interchain with G-Cter in ubiquitin) cross-links involve residues Lys83, Lys88, and Lys104. The S-palmitoyl cysteine moiety is linked to residue Cys105. The segment at 108–133 is interaction with VAPA; it reads ISSLVLSILMVIITIVTVVIIALNAP. A helical membrane pass occupies residues 110–130; sequence SLVLSILMVIITIVTVVIIAL. Residues 131 to 137 lie on the Extracellular side of the membrane; the sequence is NAPRLQT.

Belongs to the CD225/Dispanin family. As to quaternary structure, interacts with ATP6V0B. Interacts with CD81. Interacts with SPP1; the interaction reduces OPN expression. Interacts with BRI3. Post-translationally, polyubiquitinated with both 'Lys-48' and 'Lys-63' linkages. Ubiquitination negatively regulates antiviral activity. Lys-24 is the most prevalent ubiquitination site. Phosphorylation at Tyr-20 is required for endosomal and lysosomal location.

Its subcellular location is the cell membrane. It is found in the late endosome membrane. It localises to the early endosome membrane. The protein localises to the lysosome membrane. The protein resides in the cytoplasm. Its subcellular location is the perinuclear region. Functionally, IFN-induced antiviral protein which disrupts intracellular cholesterol homeostasis. Inhibits the entry of viruses to the host cell cytoplasm by preventing viral fusion with cholesterol depleted endosomes. May inactivate new enveloped viruses which buds out of the infected cell, by letting them go out with a cholesterol depleted membrane. Active against multiple viruses. Plays a critical role in the structural stability and function of vacuolar ATPase (v-ATPase). Establishes physical contact with the v-ATPase of endosomes which is critical for proper clathrin localization and is also required for the function of the v-ATPase to lower the pH in phagocytic endosomes thus establishing an antiviral state. In Rattus norvegicus (Rat), this protein is Interferon-induced transmembrane protein 3.